The primary structure comprises 88 residues: Apolipoprotein C-I (88 aa).

Positions 1–26 (MRLILSLPVLVVVLSMVLEGPAPAQA) are cleaved as a signal peptide.

The protein belongs to the apolipoprotein C1 family.

The protein localises to the secreted. Inhibitor of lipoprotein binding to the low density lipoprotein (LDL) receptor, LDL receptor-related protein, and very low density lipoprotein (VLDL) receptor. Associates with high density lipoproteins (HDL) and the triacylglycerol-rich lipoproteins in the plasma and makes up about 10% of the protein of the VLDL and 2% of that of HDL. Appears to interfere directly with fatty acid uptake and is also the major plasma inhibitor of cholesteryl ester transfer protein (CETP). Binds free fatty acids and reduces their intracellular esterification. Modulates the interaction of APOE with beta-migrating VLDL and inhibits binding of beta-VLDL to the LDL receptor-related protein. The polypeptide is Apolipoprotein C-I (APOC1) (Lycaon pictus (African wild dog)).